Consider the following 437-residue polypeptide: Enolase (437 aa).

Gln162 contributes to the (2R)-2-phosphoglycerate binding site. Glu204 (proton donor) is an active-site residue. The Mg(2+) site is built by Asp251, Glu297, and Asp324. The (2R)-2-phosphoglycerate site is built by Lys349, Arg378, Ser379, and Lys400. Lys349 acts as the Proton acceptor in catalysis.

Belongs to the enolase family. Requires Mg(2+) as cofactor.

The protein localises to the cytoplasm. The protein resides in the secreted. Its subcellular location is the cell surface. The catalysed reaction is (2R)-2-phosphoglycerate = phosphoenolpyruvate + H2O. Its pathway is carbohydrate degradation; glycolysis; pyruvate from D-glyceraldehyde 3-phosphate: step 4/5. Its function is as follows. Catalyzes the reversible conversion of 2-phosphoglycerate (2-PG) into phosphoenolpyruvate (PEP). It is essential for the degradation of carbohydrates via glycolysis. This is Enolase from Chlorobium chlorochromatii (strain CaD3).